Here is a 471-residue protein sequence, read N- to C-terminus: Alpha-galactosidase (471 aa).

A signal peptide spans 1–18 (MSYIYLFITAAAVTGALG). A disulfide bond links C42 and C74. Substrate-binding residues include D72 and D73. N82 carries an N-linked (GlcNAc...) asparagine glycan. Residues C121 and C151 are joined by a disulfide bond. Substrate is bound at residue K147. D149 acts as the Nucleophile in catalysis. N175 carries an N-linked (GlcNAc...) asparagine glycan. R205 contacts substrate. Catalysis depends on D209, which acts as the Proton donor. Disulfide bonds link C221-C237 and C223-C230. Q251 contributes to the substrate binding site. N-linked (GlcNAc...) asparagine glycosylation is found at N270, N361, N370, N417, N422, N435, and N454.

The protein belongs to the glycosyl hydrolase 27 family. As to quaternary structure, homotetramer.

It is found in the secreted. The catalysed reaction is Hydrolysis of terminal, non-reducing alpha-D-galactose residues in alpha-D-galactosides, including galactose oligosaccharides, galactomannans and galactolipids.. The polypeptide is Alpha-galactosidase (MEL) (Saccharomyces mikatae (Yeast)).